Reading from the N-terminus, the 51-residue chain is Large ribosomal subunit protein eL39-like (51 aa).

The protein belongs to the eukaryotic ribosomal protein eL39 family. As to quaternary structure, component of a male germ cell-specific 60S large ribosomal subunit (LSU), which contains RPL10L and RPL39L, instead of RPL10 and RPL39 paralogs. The composition of the rest of the complex is similar to classical ribosomes. In terms of tissue distribution, highly expressed in spermatocytes and spermatids. Highly expressed in embryonic stem cells.

Its subcellular location is the cytoplasm. Its function is as follows. Male germ cell-specific component of the ribosome, which is required for the formation of sperm and male fertility. Replaces the RPL39 paralog in the ribosome of male germ cells. The ribosome is a large ribonucleoprotein complex responsible for the synthesis of proteins in the cell. The male germ cell-specific ribosome displays a ribosomal polypeptide exit tunnel of distinct size and charge states compared with the classical ribosome. It is responsible for regulating the biosynthesis and folding of a subset of male germ-cell-specific proteins that are essential for the formation of sperm. In Mus musculus (Mouse), this protein is Large ribosomal subunit protein eL39-like.